We begin with the raw amino-acid sequence, 96 residues long: Protein TraA (96 aa).

The polypeptide is Protein TraA (traA) (Escherichia coli).